We begin with the raw amino-acid sequence, 206 residues long: Protein GET1 (206 aa).

The Lumenal portion of the chain corresponds to 1–4 (MPSL). A helical membrane pass occupies residues 5-24 (LITILLLNIVIYVINTIGAA). The Cytoplasmic segment spans residues 25–110 (TIDSLLWLFY…SFDMTVKSVR (86 aa)). Residues 42–99 (SHMAREQRRLKREVIQLKREMNATSSQDEFAKWAKLRRRHDKALETYEAKNNELTQCK) adopt a coiled-coil conformation. Residues 111–131 (WAATSGLMLFLQFWYSKRPIF) form a helical membrane-spanning segment. The Lumenal segment spans residues 132-155 (TLPPGWIPWQVQWVLSFPRAPMGT). The chain crosses the membrane as a helical span at residues 156–172 (VSIQIWGGACATVVALV). At 173 to 206 (GDAVGATMGFVSASKKEGMKVGAGVGEKEGKKSQ) the chain is on the cytoplasmic side.

It belongs to the WRB/GET1 family. Interacts with GET3.

Its subcellular location is the endoplasmic reticulum membrane. In terms of biological role, required for the post-translational delivery of tail-anchored (TA) proteins to the endoplasmic reticulum. Acts as a membrane receptor for soluble GET3, which recognizes and selectively binds the transmembrane domain of TA proteins in the cytosol. The polypeptide is Protein GET1 (Ajellomyces dermatitidis (strain ER-3 / ATCC MYA-2586) (Blastomyces dermatitidis)).